The chain runs to 165 residues: Small ribosomal subunit protein uS5 (165 aa).

One can recognise an S5 DRBM domain in the interval 10–73 (LVEKLVAVDR…EAARRNMITV (64 aa)).

It belongs to the universal ribosomal protein uS5 family. As to quaternary structure, part of the 30S ribosomal subunit. Contacts proteins S4 and S8.

Its function is as follows. With S4 and S12 plays an important role in translational accuracy. Functionally, located at the back of the 30S subunit body where it stabilizes the conformation of the head with respect to the body. The protein is Small ribosomal subunit protein uS5 of Acinetobacter baumannii (strain AB307-0294).